We begin with the raw amino-acid sequence, 582 residues long: Frizzled-10 (582 aa).

A signal peptide spans 1–21; the sequence is MQHPGPRLWLVLQVMIGSCTA. Residues 22-226 are Extracellular-facing; it reads ISSMDLERPG…DVYWSRDDKR (205 aa). The region spanning 30–151 is the FZ domain; the sequence is PGDGKCQPVE…NDPNYLCMEA (122 aa). Disulfide bonds link cysteine 35/cysteine 96, cysteine 43/cysteine 89, cysteine 80/cysteine 118, cysteine 107/cysteine 148, and cysteine 111/cysteine 135. N-linked (GlcNAc...) asparagine glycosylation occurs at asparagine 49. The disordered stretch occupies residues 153–189; sequence NNGSDEPSRGSGMFPPLFRPQRPHSAQEHPLKDGGPG. Asparagine 154 is a glycosylation site (N-linked (GlcNAc...) asparagine). A helical transmembrane segment spans residues 227–247; the sequence is FAVVWLAIWSVLCFFSSAFTV. Residues 248-263 are Cytoplasmic-facing; it reads LTFLIDPSRFRYPERP. A helical membrane pass occupies residues 264–284; it reads IIFLSMCYCVYSVGYIIRLFA. Residues 285 to 312 are Extracellular-facing; the sequence is GAESIACDRDSGQLYVIQEGLESTGCTL. Residues 313–333 form a helical membrane-spanning segment; sequence VFLVLYYFGMASSLWWVVLTL. Topologically, residues 334 to 352 are cytoplasmic; that stretch reads TWFLAAGKKWGHEAIEANS. A helical membrane pass occupies residues 353–373; it reads SYFHLAAWAIPAVKTILILVM. At 374–394 the chain is on the extracellular side; that stretch reads RRVAGDELTGVCYVGSMDVNA. Residues 395 to 415 form a helical membrane-spanning segment; it reads LTGFVLVPLACYLVIGTSFIL. The Cytoplasmic segment spans residues 416–444; sequence SGFVALFHIRRVMKTGGENTDKLEKLMVR. Residues 445–465 form a helical membrane-spanning segment; the sequence is IGVFSLLYTVPATCVIACYFY. Residues 466–503 lie on the Extracellular side of the membrane; sequence ERLNMDYWKMLATQHKCKMNNQTKTPDCLMTTSIPAVE. Asparagine 486 carries an N-linked (GlcNAc...) asparagine glycan. Residues 504 to 524 traverse the membrane as a helical segment; sequence VFMVKVSMLLVVGITSGVWVW. Residues 525-582 are Cytoplasmic-facing; the sequence is TSKTLQSWQHVCSRGLKRKSRRKPASVVTSAGIYKKAQHPQKPHLGKYELPAQPSACV. Positions 527-532 match the Lys-Thr-X-X-X-Trp motif, mediates interaction with the PDZ domain of Dvl family members motif; that stretch reads KTLQSW. Residues 561 to 582 are disordered; that stretch reads AQHPQKPHLGKYELPAQPSACV. The short motif at 580–582 is the PDZ-binding element; sequence ACV.

Belongs to the G-protein coupled receptor Fz/Smo family. In terms of assembly, interacts with MYOC. Interacts with WNT7B. Post-translationally, ubiquitinated by ZNRF3, leading to its degradation by the proteasome.

The protein localises to the cell membrane. Its function is as follows. Receptor for Wnt proteins. Functions in the canonical Wnt/beta-catenin signaling pathway. The canonical Wnt/beta-catenin signaling pathway leads to the activation of disheveled proteins, inhibition of GSK-3 kinase, nuclear accumulation of beta-catenin and activation of Wnt target genes. A second signaling pathway involving PKC and calcium fluxes has been seen for some family members, but it is not yet clear if it represents a distinct pathway or if it can be integrated in the canonical pathway, as PKC seems to be required for Wnt-mediated inactivation of GSK-3 kinase. Both pathways seem to involve interactions with G-proteins. May be involved in transduction and intercellular transmission of polarity information during tissue morphogenesis and/or in differentiated tissues. The polypeptide is Frizzled-10 (Fzd10) (Mus musculus (Mouse)).